A 331-amino-acid chain; its full sequence is ESX-3 secretion system protein EccE3 (331 aa).

2 consecutive transmembrane segments (helical) span residues 11–31 and 37–57; these read GRVT…PWQS and LLGV…GLYF.

Belongs to the EccE family. As to quaternary structure, part of the ESX-3 / type VII secretion system (T7SS), which is composed of cytosolic and membrane components. The ESX-3 membrane complex is composed of EccB3, EccC3, EccD3 and EccE3.

It localises to the cell inner membrane. Functionally, part of the ESX-3 specialized secretion system, which is important for iron and zinc uptake or homeostasis. The polypeptide is ESX-3 secretion system protein EccE3 (Mycobacterium tuberculosis (strain ATCC 25618 / H37Rv)).